A 392-amino-acid chain; its full sequence is Formate-dependent phosphoribosylglycinamide formyltransferase (392 aa).

N(1)-(5-phospho-beta-D-ribosyl)glycinamide-binding positions include 20–21 (EL) and glutamate 80. ATP is bound by residues arginine 112, lysine 153, 158–163 (SSGKGQ), 193–196 (EGFI), and glutamate 201. Residues 117 to 306 (RLAAETLALP…EFALHVRAIL (190 aa)) enclose the ATP-grasp domain. The Mg(2+) site is built by glutamate 265 and glutamate 277. N(1)-(5-phospho-beta-D-ribosyl)glycinamide contacts are provided by residues aspartate 284, lysine 354, and 361 to 362 (RR).

It belongs to the PurK/PurT family. In terms of assembly, homodimer.

It carries out the reaction N(1)-(5-phospho-beta-D-ribosyl)glycinamide + formate + ATP = N(2)-formyl-N(1)-(5-phospho-beta-D-ribosyl)glycinamide + ADP + phosphate + H(+). It functions in the pathway purine metabolism; IMP biosynthesis via de novo pathway; N(2)-formyl-N(1)-(5-phospho-D-ribosyl)glycinamide from N(1)-(5-phospho-D-ribosyl)glycinamide (formate route): step 1/1. Functionally, involved in the de novo purine biosynthesis. Catalyzes the transfer of formate to 5-phospho-ribosyl-glycinamide (GAR), producing 5-phospho-ribosyl-N-formylglycinamide (FGAR). Formate is provided by PurU via hydrolysis of 10-formyl-tetrahydrofolate. This Shewanella amazonensis (strain ATCC BAA-1098 / SB2B) protein is Formate-dependent phosphoribosylglycinamide formyltransferase.